The sequence spans 350 residues: Dihydroorotase (350 aa).

Zn(2+) is bound by residues His-17 and His-19. Residues 19–21 and Asn-45 contribute to the substrate site; that span reads HLR. Zn(2+)-binding residues include Lys-103, His-140, and His-178. The residue at position 103 (Lys-103) is an N6-carboxylysine. His-140 contributes to the substrate binding site. Position 224 (Leu-224) interacts with substrate. Residue Asp-252 participates in Zn(2+) binding. Asp-252 is an active-site residue. Residues His-256 and Ala-268 each contribute to the substrate site.

It belongs to the metallo-dependent hydrolases superfamily. DHOase family. Class II DHOase subfamily. Homodimer. Zn(2+) is required as a cofactor.

The catalysed reaction is (S)-dihydroorotate + H2O = N-carbamoyl-L-aspartate + H(+). The protein operates within pyrimidine metabolism; UMP biosynthesis via de novo pathway; (S)-dihydroorotate from bicarbonate: step 3/3. Functionally, catalyzes the reversible cyclization of carbamoyl aspartate to dihydroorotate. The protein is Dihydroorotase of Buchnera aphidicola subsp. Acyrthosiphon pisum (strain 5A).